A 390-amino-acid chain; its full sequence is Altered inheritance of mitochondria protein 6 (390 aa).

The first 26 residues, 1–26 (MLGLKGCLTILIGYVIAVCALFSSRG), serve as a signal peptide directing secretion.

Belongs to the AIM6 family.

The chain is Altered inheritance of mitochondria protein 6 (AIM6) from Saccharomyces cerevisiae (strain RM11-1a) (Baker's yeast).